A 704-amino-acid polypeptide reads, in one-letter code: Elongation factor G (704 aa).

A tr-type G domain is found at 8–290 (ARYRNIGISA…AVIDYLPSPV (283 aa)). GTP contacts are provided by residues 17–24 (AHIDAGKT), 88–92 (DTPGH), and 142–145 (NKMD).

The protein belongs to the TRAFAC class translation factor GTPase superfamily. Classic translation factor GTPase family. EF-G/EF-2 subfamily.

The protein resides in the cytoplasm. Catalyzes the GTP-dependent ribosomal translocation step during translation elongation. During this step, the ribosome changes from the pre-translocational (PRE) to the post-translocational (POST) state as the newly formed A-site-bound peptidyl-tRNA and P-site-bound deacylated tRNA move to the P and E sites, respectively. Catalyzes the coordinated movement of the two tRNA molecules, the mRNA and conformational changes in the ribosome. The sequence is that of Elongation factor G from Cronobacter sakazakii (strain ATCC BAA-894) (Enterobacter sakazakii).